The chain runs to 266 residues: Undecaprenyl-diphosphatase (266 aa).

8 helical membrane passes run 2-22 (INIL…FLPI), 39-59 (LPII…IIYY), 86-106 (LKLI…GTFI), 112-132 (MFIL…ILML), 145-165 (ILLV…PGIS), 184-204 (AFEI…LFKY), 212-232 (MVLN…VGII), and 246-266 (LYYF…FFRI).

The protein belongs to the UppP family.

It is found in the cell inner membrane. The catalysed reaction is di-trans,octa-cis-undecaprenyl diphosphate + H2O = di-trans,octa-cis-undecaprenyl phosphate + phosphate + H(+). Functionally, catalyzes the dephosphorylation of undecaprenyl diphosphate (UPP). Confers resistance to bacitracin. The chain is Undecaprenyl-diphosphatase from Borrelia garinii subsp. bavariensis (strain ATCC BAA-2496 / DSM 23469 / PBi) (Borreliella bavariensis).